Reading from the N-terminus, the 604-residue chain is Kelch-like protein 15 (604 aa).

Residues 31–98 enclose the BTB domain; the sequence is LDVTLVIEDH…MYYGTIELSM (68 aa). A BACK domain is found at 133–237; it reads CAEIMRLLDD…TPSSVFEKVK (105 aa). Kelch repeat units lie at residues 328 to 379, 381 to 426, 428 to 473, 489 to 542, and 544 to 590; these read FVFL…VIGK, IYAV…VLNN, LFIT…NKSK, KLYV…VLDK, and IMVL…VCNL.

In terms of assembly, homodimer. Dimerization does not affect PPP2R5B-binding, but is required for its proteasomal degradation. Interacts with CUL3. Directly interacts with PPP2R5B; this interaction leads to PPP2R5B proteasomal degradation. Interacts with RBBP8/CtIP; this interaction leads to RBBP8 proteasomal degradation. Interacts with PACMP micropeptide; interaction prevents ubiquitination and degradation of RBBP8/CtIP.

The protein localises to the nucleus. The protein operates within protein modification; protein ubiquitination. Functionally, substrate-specific adapter for CUL3 E3 ubiquitin-protein ligase complex. Acts as an adapter for CUL3 to target the serine/threonine-protein phosphatase 2A (PP2A) subunit PPP2R5B for ubiquitination and subsequent proteasomal degradation, thus promoting exchange with other regulatory subunits and regulating PP2A holoenzyme composition. Acts as an adapter for CUL3 to target the DNA-end resection factor RBBP8/CtIP for ubiquitination and subsequent proteasomal degradation. Through the regulation of RBBP8/CtIP protein turnover, plays a key role in DNA damage response, favoring DNA double-strand repair through error-prone non-homologous end joining (NHEJ) over error-free, RBBP8-mediated homologous recombination (HR). This chain is Kelch-like protein 15 (Klhl15), found in Mus musculus (Mouse).